We begin with the raw amino-acid sequence, 527 residues long: Rhamnogalacturonate lyase A (527 aa).

Positions 1-19 (MLKASLLSFVAFTAQVAHA) are cleaved as a signal peptide. 2 cysteine pairs are disulfide-bonded: Cys49–Cys92 and Cys183–Cys192. A glycan (N-linked (GlcNAc...) asparagine) is linked at Asn350.

It belongs to the polysaccharide lyase 4 family.

The protein localises to the secreted. It catalyses the reaction Endotype eliminative cleavage of L-alpha-rhamnopyranosyl-(1-&gt;4)-alpha-D-galactopyranosyluronic acid bonds of rhamnogalacturonan I domains in ramified hairy regions of pectin leaving L-rhamnopyranose at the reducing end and 4-deoxy-4,5-unsaturated D-galactopyranosyluronic acid at the non-reducing end.. Functionally, pectinolytic enzyme that has a positive effect in the apple hot-mash liquefaction process. This endolyase hydrolyzes the alpha-L-rhamnopyranosyl-(1,4)-alpha-D-galacturonopyranosyl glycosidic linkage by beta-elimination, thereby generating oligosaccharides terminating at the non-reducing end with a hex-4-enopyranosyluronic acid residue. This chain is Rhamnogalacturonate lyase A (rglA), found in Aspergillus aculeatus.